Here is a 147-residue protein sequence, read N- to C-terminus: Hemoglobin subunit gamma (147 aa).

Residues 3–147 (HFTAEEKAAI…VANALAYKYH (145 aa)) form the Globin domain. Residues His-64 and His-93 each contribute to the heme b site.

This sequence belongs to the globin family. Heterotetramer of two alpha chains and two gamma chains in fetal hemoglobin (Hb F). In terms of tissue distribution, red blood cells.

Gamma chains make up the fetal hemoglobin F, in combination with alpha chains. This is Hemoglobin subunit gamma (HBG) from Loxodonta africana (African elephant).